The chain runs to 248 residues: Probable transcriptional regulatory protein NGR_c27950 (248 aa).

It belongs to the TACO1 family.

It localises to the cytoplasm. This is Probable transcriptional regulatory protein NGR_c27950 from Sinorhizobium fredii (strain NBRC 101917 / NGR234).